Reading from the N-terminus, the 297-residue chain is tRNA pseudouridine synthase B (297 aa).

D44 serves as the catalytic Nucleophile.

Belongs to the pseudouridine synthase TruB family. Type 1 subfamily.

It catalyses the reaction uridine(55) in tRNA = pseudouridine(55) in tRNA. Functionally, responsible for synthesis of pseudouridine from uracil-55 in the psi GC loop of transfer RNAs. The protein is tRNA pseudouridine synthase B of Corynebacterium glutamicum (strain R).